A 198-amino-acid chain; its full sequence is dTTP/UTP pyrophosphatase (198 aa).

The active-site Proton acceptor is D72.

This sequence belongs to the Maf family. YhdE subfamily. The cofactor is a divalent metal cation.

Its subcellular location is the cytoplasm. It carries out the reaction dTTP + H2O = dTMP + diphosphate + H(+). The catalysed reaction is UTP + H2O = UMP + diphosphate + H(+). Functionally, nucleoside triphosphate pyrophosphatase that hydrolyzes dTTP and UTP. May have a dual role in cell division arrest and in preventing the incorporation of modified nucleotides into cellular nucleic acids. The polypeptide is dTTP/UTP pyrophosphatase (Pseudomonas fluorescens (strain Pf0-1)).